Consider the following 339-residue polypeptide: Erlin-2 (339 aa).

The Cytoplasmic segment spans residues 1 to 3; sequence MAQ. Residues 4–24 form a helical membrane-spanning segment; that stretch reads LGAVVAVASSFFCASLFSAVH. Residues 25–339 are Lumenal-facing; sequence KIEEGHIGVY…EPLETATKEN (315 aa). Asn106 carries an N-linked (GlcNAc...) asparagine glycan. Residues 177–309 form an interaction with ERLIN1 region; the sequence is EAIRRNYELM…DIPNMFMDSA (133 aa). Lys267 carries the post-translational modification N6-acetyllysine.

The protein belongs to the band 7/mec-2 family. Forms a heteromeric complex with ERLIN1. In complex with ERLIN1, interacts with RNF170. Interacts with activated ITPR1, independently of the degree of ITPR1 polyubiquitination. Interacts with SCAP, INSIG1, SREBF1 and SREBF2 under cholesterol sufficiency conditions; indicative for an association with the SCAP-SREBP-INSIG complex. Probably part of an AMFR/gp78 and INSIG1-containing ubiquitin ligase complex involved in ERAD of HMGCR. Interacts with TMUB1; TMUB1 bridges the association with AMFR. Interacts with SYVN1 and RNF139. Interacts with TMEM259. Interacts with TMEM41B. In terms of processing, deubiquitinated by USP25; leading to stabilization. Ubiquitous.

It localises to the endoplasmic reticulum membrane. Its function is as follows. Component of the ERLIN1/ERLIN2 complex which mediates the endoplasmic reticulum-associated degradation (ERAD) of inositol 1,4,5-trisphosphate receptors (IP3Rs) such as ITPR1. Promotes sterol-accelerated ERAD of HMGCR probably implicating an AMFR/gp78-containing ubiquitin ligase complex. Involved in regulation of cellular cholesterol homeostasis by regulation the SREBP signaling pathway. May promote ER retention of the SCAP-SREBF complex. The polypeptide is Erlin-2 (ERLIN2) (Homo sapiens (Human)).